Consider the following 362-residue polypeptide: Phosphoserine aminotransferase (362 aa).

R43 serves as a coordination point for L-glutamate. Pyridoxal 5'-phosphate-binding positions include 77-78 (AR), W103, T153, D173, and Q196. N6-(pyridoxal phosphate)lysine is present on K197.

This sequence belongs to the class-V pyridoxal-phosphate-dependent aminotransferase family. SerC subfamily. As to quaternary structure, homodimer. Requires pyridoxal 5'-phosphate as cofactor.

The protein localises to the cytoplasm. The catalysed reaction is O-phospho-L-serine + 2-oxoglutarate = 3-phosphooxypyruvate + L-glutamate. It catalyses the reaction 4-(phosphooxy)-L-threonine + 2-oxoglutarate = (R)-3-hydroxy-2-oxo-4-phosphooxybutanoate + L-glutamate. It functions in the pathway amino-acid biosynthesis; L-serine biosynthesis; L-serine from 3-phospho-D-glycerate: step 2/3. It participates in cofactor biosynthesis; pyridoxine 5'-phosphate biosynthesis; pyridoxine 5'-phosphate from D-erythrose 4-phosphate: step 3/5. Functionally, catalyzes the reversible conversion of 3-phosphohydroxypyruvate to phosphoserine and of 3-hydroxy-2-oxo-4-phosphonooxybutanoate to phosphohydroxythreonine. This is Phosphoserine aminotransferase from Legionella pneumophila (strain Lens).